The sequence spans 453 residues: ATP-dependent protease ATPase subunit HslU (453 aa).

ATP is bound by residues isoleucine 18, 60–65 (GVGKTE), aspartate 266, glutamate 331, and arginine 403.

It belongs to the ClpX chaperone family. HslU subfamily. In terms of assembly, a double ring-shaped homohexamer of HslV is capped on each side by a ring-shaped HslU homohexamer. The assembly of the HslU/HslV complex is dependent on binding of ATP.

The protein resides in the cytoplasm. Functionally, ATPase subunit of a proteasome-like degradation complex; this subunit has chaperone activity. The binding of ATP and its subsequent hydrolysis by HslU are essential for unfolding of protein substrates subsequently hydrolyzed by HslV. HslU recognizes the N-terminal part of its protein substrates and unfolds these before they are guided to HslV for hydrolysis. The chain is ATP-dependent protease ATPase subunit HslU from Desulforapulum autotrophicum (strain ATCC 43914 / DSM 3382 / VKM B-1955 / HRM2) (Desulfobacterium autotrophicum).